An 832-amino-acid chain; its full sequence is Protein P (832 aa).

The terminal protein domain (TP) stretch occupies residues 1–177; the sequence is MPLSCQHFRK…FCGSPYSWEQ (177 aa). Positions 178–335 are spacer; it reads ELQHGAEPFC…NCLSHIVNLL (158 aa). Residues 198–264 form a disordered region; that stretch reads SIGPAVPSQH…HNTASSSSSC (67 aa). Residues 336-679 are polymerase/reverse transcriptase domain (RT); it reads EDWGPCTEHG…YLTLYPVARQ (344 aa). Residues 346 to 589 enclose the Reverse transcriptase domain; the sequence is EHLIRIPRTP…YSLHFMGYVI (244 aa). Residues Asp418, Asp540, and Asp541 each coordinate Mg(2+).

It belongs to the hepadnaviridae P protein family.

The enzyme catalyses DNA(n) + a 2'-deoxyribonucleoside 5'-triphosphate = DNA(n+1) + diphosphate. It carries out the reaction Endonucleolytic cleavage to 5'-phosphomonoester.. Activated by host HSP70 and HSP40 in vitro to be able to bind the epsilon loop of the pgRNA. Because deletion of the RNase H region renders the protein partly chaperone-independent, the chaperones may be needed indirectly to relieve occlusion of the RNA-binding site by this domain. Inhibited by several reverse-transcriptase inhibitors: Lamivudine, Adefovir and Entecavir. In terms of biological role, multifunctional enzyme that converts the viral RNA genome into dsDNA in viral cytoplasmic capsids. This enzyme displays a DNA polymerase activity that can copy either DNA or RNA templates, and a ribonuclease H (RNase H) activity that cleaves the RNA strand of RNA-DNA heteroduplexes in a partially processive 3'- to 5'-endonucleasic mode. Neo-synthesized pregenomic RNA (pgRNA) are encapsidated together with the P protein, and reverse-transcribed inside the nucleocapsid. Initiation of reverse-transcription occurs first by binding the epsilon loop on the pgRNA genome, and is initiated by protein priming, thereby the 5'-end of (-)DNA is covalently linked to P protein. Partial (+)DNA is synthesized from the (-)DNA template and generates the relaxed circular DNA (RC-DNA) genome. After budding and infection, the RC-DNA migrates in the nucleus, and is converted into a plasmid-like covalently closed circular DNA (cccDNA). The activity of P protein does not seem to be necessary for cccDNA generation, and is presumably released from (+)DNA by host nuclear DNA repair machinery. The protein is Protein P of Pongo pygmaeus (Bornean orangutan).